The chain runs to 357 residues: Probable cinnamyl alcohol dehydrogenase 7/8 (357 aa).

Zn(2+) is bound at residue Cys47. Ser49 contributes to the NADP(+) binding site. Zn(2+) is bound by residues His69, Glu70, Cys100, Cys103, Cys106, Cys114, and Cys163. Residues Thr167, 188 to 193 (GLGGVG), 211 to 216 (SSSDKK), Thr251, Gly275, and 298 to 300 (SFI) contribute to the NADP(+) site.

The protein belongs to the zinc-containing alcohol dehydrogenase family. Homodimer. The cofactor is Zn(2+).

The catalysed reaction is (E)-cinnamyl alcohol + NADP(+) = (E)-cinnamaldehyde + NADPH + H(+). It catalyses the reaction (E)-coniferol + NADP(+) = (E)-coniferaldehyde + NADPH + H(+). It carries out the reaction (E)-sinapyl alcohol + NADP(+) = (E)-sinapaldehyde + NADPH + H(+). The enzyme catalyses (E)-4-coumaroyl alcohol + NADP(+) = (E)-4-coumaraldehyde + NADPH + H(+). The catalysed reaction is (E)-caffeyl alcohol + NADP(+) = (E)-caffeyl aldehyde + NADPH + H(+). The protein operates within aromatic compound metabolism; phenylpropanoid biosynthesis. Functionally, involved in lignin biosynthesis. Catalyzes the final step specific for the production of lignin monomers. Catalyzes the NADPH-dependent reduction of coniferaldehyde, 5-hydroxyconiferaldehyde, sinapaldehyde, 4-coumaraldehyde and caffeyl aldehyde to their respective alcohols. This Picea abies (Norway spruce) protein is Probable cinnamyl alcohol dehydrogenase 7/8 (CAD7).